Here is a 226-residue protein sequence, read N- to C-terminus: Putative N-acetylmannosamine-6-phosphate 2-epimerase 1 (226 aa).

The protein belongs to the NanE family.

The enzyme catalyses an N-acyl-D-glucosamine 6-phosphate = an N-acyl-D-mannosamine 6-phosphate. The protein operates within amino-sugar metabolism; N-acetylneuraminate degradation; D-fructose 6-phosphate from N-acetylneuraminate: step 3/5. In terms of biological role, converts N-acetylmannosamine-6-phosphate (ManNAc-6-P) to N-acetylglucosamine-6-phosphate (GlcNAc-6-P). The polypeptide is Putative N-acetylmannosamine-6-phosphate 2-epimerase 1 (nanE1) (Salmonella typhimurium (strain LT2 / SGSC1412 / ATCC 700720)).